A 263-amino-acid chain; its full sequence is Probable adenylate kinase 7, mitochondrial (263 aa).

Residues 1–30 constitute a mitochondrion transit peptide; that stretch reads MAWLSRVRGVSPVTRLAAIRRSFGSAAALE. An ATP-binding site is contributed by 72 to 77; that stretch reads GAWRHV. The segment at 92-121 is NMP; it reads SMGSLVRQELNPRSSLYKEIASAVNERKLV. AMP contacts are provided by residues Arg-98, 119 to 121, 149 to 152, Gln-156, and Arg-206; these read KLV and GIPR. An ATP-binding site is contributed by Gly-234.

Belongs to the adenylate kinase family. As to quaternary structure, monomer.

It localises to the mitochondrion. The catalysed reaction is AMP + ATP = 2 ADP. Functionally, catalyzes the reversible transfer of the terminal phosphate group between ATP and AMP. Plays an important role in cellular energy homeostasis and in adenine nucleotide metabolism. The sequence is that of Probable adenylate kinase 7, mitochondrial from Arabidopsis thaliana (Mouse-ear cress).